The following is a 177-amino-acid chain: Large ribosomal subunit protein uL6 (177 aa).

The protein belongs to the universal ribosomal protein uL6 family. As to quaternary structure, part of the 50S ribosomal subunit.

Functionally, this protein binds to the 23S rRNA, and is important in its secondary structure. It is located near the subunit interface in the base of the L7/L12 stalk, and near the tRNA binding site of the peptidyltransferase center. In Klebsiella pneumoniae (strain 342), this protein is Large ribosomal subunit protein uL6.